The sequence spans 699 residues: Elongation factor G (699 aa).

One can recognise a tr-type G domain in the interval 10–292 (NRTRNIGIMA…AVIDYLPSPT (283 aa)). Residues 19–26 (AHIDAGKT), 90–94 (DTPGH), and 144–147 (NKMD) contribute to the GTP site. The segment at 292–312 (TDVPAIRGEEDDGSEGSRSAS) is disordered.

This sequence belongs to the TRAFAC class translation factor GTPase superfamily. Classic translation factor GTPase family. EF-G/EF-2 subfamily.

The protein resides in the cytoplasm. Catalyzes the GTP-dependent ribosomal translocation step during translation elongation. During this step, the ribosome changes from the pre-translocational (PRE) to the post-translocational (POST) state as the newly formed A-site-bound peptidyl-tRNA and P-site-bound deacylated tRNA move to the P and E sites, respectively. Catalyzes the coordinated movement of the two tRNA molecules, the mRNA and conformational changes in the ribosome. The polypeptide is Elongation factor G (Coxiella burnetii (strain CbuG_Q212) (Coxiella burnetii (strain Q212))).